A 94-amino-acid chain; its full sequence is ATP synthase subunit c (94 aa).

Transmembrane regions (helical) follow at residues I15 to I35 and F58 to F78.

It belongs to the ATPase C chain family. As to quaternary structure, F-type ATPases have 2 components, F(1) - the catalytic core - and F(0) - the membrane proton channel. F(1) has five subunits: alpha(3), beta(3), gamma(1), delta(1), epsilon(1). F(0) has three main subunits: a(1), b(2) and c(10-14). The alpha and beta chains form an alternating ring which encloses part of the gamma chain. F(1) is attached to F(0) by a central stalk formed by the gamma and epsilon chains, while a peripheral stalk is formed by the delta and b chains.

The protein resides in the cell inner membrane. Functionally, f(1)F(0) ATP synthase produces ATP from ADP in the presence of a proton or sodium gradient. F-type ATPases consist of two structural domains, F(1) containing the extramembraneous catalytic core and F(0) containing the membrane proton channel, linked together by a central stalk and a peripheral stalk. During catalysis, ATP synthesis in the catalytic domain of F(1) is coupled via a rotary mechanism of the central stalk subunits to proton translocation. Key component of the F(0) channel; it plays a direct role in translocation across the membrane. A homomeric c-ring of between 10-14 subunits forms the central stalk rotor element with the F(1) delta and epsilon subunits. The sequence is that of ATP synthase subunit c from Hydrogenovibrio crunogenus (strain DSM 25203 / XCL-2) (Thiomicrospira crunogena).